Consider the following 301-residue polypeptide: N-acetylmuramic acid 6-phosphate etherase (301 aa).

One can recognise an SIS domain in the interval 57-220 (IAEAFRQGGR…TTGAMIRTGK (164 aa)). Catalysis depends on Glu85, which acts as the Proton donor. The active site involves Glu116.

This sequence belongs to the GCKR-like family. MurNAc-6-P etherase subfamily. In terms of assembly, homodimer.

It catalyses the reaction N-acetyl-D-muramate 6-phosphate + H2O = N-acetyl-D-glucosamine 6-phosphate + (R)-lactate. The protein operates within amino-sugar metabolism; 1,6-anhydro-N-acetylmuramate degradation. It participates in amino-sugar metabolism; N-acetylmuramate degradation. It functions in the pathway cell wall biogenesis; peptidoglycan recycling. Its function is as follows. Specifically catalyzes the cleavage of the D-lactyl ether substituent of MurNAc 6-phosphate, producing GlcNAc 6-phosphate and D-lactate. Together with AnmK, is also required for the utilization of anhydro-N-acetylmuramic acid (anhMurNAc) either imported from the medium or derived from its own cell wall murein, and thus plays a role in cell wall recycling. This Photorhabdus laumondii subsp. laumondii (strain DSM 15139 / CIP 105565 / TT01) (Photorhabdus luminescens subsp. laumondii) protein is N-acetylmuramic acid 6-phosphate etherase.